The sequence spans 235 residues: Large ribosomal subunit protein uL1 (235 aa).

Belongs to the universal ribosomal protein uL1 family. Part of the 50S ribosomal subunit.

Binds directly to 23S rRNA. The L1 stalk is quite mobile in the ribosome, and is involved in E site tRNA release. Functionally, protein L1 is also a translational repressor protein, it controls the translation of the L11 operon by binding to its mRNA. This chain is Large ribosomal subunit protein uL1, found in Nitratidesulfovibrio vulgaris (strain ATCC 29579 / DSM 644 / CCUG 34227 / NCIMB 8303 / VKM B-1760 / Hildenborough) (Desulfovibrio vulgaris).